Reading from the N-terminus, the 753-residue chain is Taperin (753 aa).

The interval 141 to 348 (FDSPAAPRRR…IRPSSKPDME (208 aa)) is disordered. Positions 182-197 (PAPPVLPSQPAPPISP) are enriched in pro residues. Composition is skewed to polar residues over residues 230–239 (LQKTGSNSFT) and 250–263 (VNRS…TQES). Position 274 is a phosphoserine (Ser274). A compositionally biased stretch (low complexity) spans 300 to 322 (TPSATPVGPPAFLAPSPASATPS). The span at 323 to 335 (QRQWVSSATSAND) shows a compositional bias: polar residues. Basic and acidic residues predominate over residues 337–347 (FEIRPSSKPDM). A phosphoserine mark is found at Ser402, Ser458, and Ser502. Residues 438–488 (GCPRPAISDTDKSVRRQRPASPPPFLPATTEAEPAEGLGVPGLTKNGQEPV) are disordered. Disordered regions lie at residues 544 to 583 (FTVV…SGPH) and 637 to 676 (FEYP…DSEK). Positions 559–571 (HLSQTNGQFQQGA) are enriched in polar residues. Positions 648-672 (EEAEEEEEEEEEEEGEDGEEEEVGP) are enriched in acidic residues.

The protein belongs to the taperin family. In terms of assembly, interacts with GRXCR2; the interaction restricts TPRN to the stereocilum basal region. Interacts with actin ACTB; the interaction may stabilize stereocilia. Interacts with CLIC5. Interacts with PTPRQ. TPRN, CLIC5 and PTPQR form concentric rings at the base of stereocilia and may form a complex. Interacts with phosphatase PPP1CA; the interaction results in inhibition of PPC1A phosphatase activity. Interacts with DNA damage response proteins XRCC6/KU70, XRCC5/KU80, PARP1, TOP1 and TOP2A; these interactions recruit TPRN to sites of DNA damage where it may play a role in DNA repair.

The protein localises to the cell projection. The protein resides in the stereocilium. It localises to the microvillus. Its subcellular location is the nucleus. It is found in the nucleoplasm. The protein localises to the cytoplasm. Functionally, essential for hearing. Required for maintenance of stereocilia on both inner and outer hair cells. Necessary for the integrity of the stereociliary rootlet. May act as an actin cytoskeleton regulator involved in the regulation of actin dynamics at the pointed end in hair cells. Forms rings at the base of stereocilia and binds actin filaments in the stereocilia which may stabilize the stereocilia. Acts as a strong inhibitor of PPP1CA phosphatase activity. Recruited to sites of DNA damage and may play a role in DNA damage repair. This chain is Taperin (Tprn), found in Rattus norvegicus (Rat).